Here is a 130-residue protein sequence, read N- to C-terminus: Small ribosomal subunit protein uS8 (130 aa).

This sequence belongs to the universal ribosomal protein uS8 family. In terms of assembly, part of the 30S ribosomal subunit. Contacts proteins S5 and S12.

Functionally, one of the primary rRNA binding proteins, it binds directly to 16S rRNA central domain where it helps coordinate assembly of the platform of the 30S subunit. This chain is Small ribosomal subunit protein uS8, found in Proteus mirabilis (strain HI4320).